A 412-amino-acid chain; its full sequence is NADH-quinone oxidoreductase subunit 4 (412 aa).

This sequence belongs to the complex I 49 kDa subunit family. NDH-1 is composed of at least 14 different subunits, Nqo1 to Nqo14. The complex has a L-shaped structure, with the hydrophobic arm (subunits Nqo7, Nqo8, Nqo10 to Nqo14) embedded in the inner membrane and the hydrophilic peripheral arm (subunits Nqo1 to Nqo6, Nqo9) protruding into the bacterial cytoplasm. The hydrophilic domain contains all the redox centers.

Its subcellular location is the cell inner membrane. It catalyses the reaction a quinone + NADH + 5 H(+)(in) = a quinol + NAD(+) + 4 H(+)(out). In terms of biological role, NDH-1 shuttles electrons from NADH, via FMN and iron-sulfur (Fe-S) centers, to quinones in the respiratory chain. The immediate electron acceptor for the enzyme in this species is believed to be ubiquinone. Couples the redox reaction to proton translocation (for every two electrons transferred, four hydrogen ions are translocated across the cytoplasmic membrane), and thus conserves the redox energy in a proton gradient. This is NADH-quinone oxidoreductase subunit 4 (nqo4) from Paracoccus denitrificans.